The sequence spans 157 residues: Protein Smg (157 aa).

This sequence belongs to the Smg family.

This is Protein Smg from Pectobacterium carotovorum subsp. carotovorum (strain PC1).